We begin with the raw amino-acid sequence, 116 residues long: Large ribosomal subunit protein bL19 (116 aa).

This sequence belongs to the bacterial ribosomal protein bL19 family.

Functionally, this protein is located at the 30S-50S ribosomal subunit interface and may play a role in the structure and function of the aminoacyl-tRNA binding site. The protein is Large ribosomal subunit protein bL19 of Pseudomonas fluorescens (strain Pf0-1).